Here is a 180-residue protein sequence, read N- to C-terminus: Large ribosomal subunit protein uL6 (180 aa).

The protein belongs to the universal ribosomal protein uL6 family. As to quaternary structure, part of the 50S ribosomal subunit.

In terms of biological role, this protein binds to the 23S rRNA, and is important in its secondary structure. It is located near the subunit interface in the base of the L7/L12 stalk, and near the tRNA binding site of the peptidyltransferase center. The protein is Large ribosomal subunit protein uL6 of Clostridium botulinum (strain Langeland / NCTC 10281 / Type F).